Consider the following 291-residue polypeptide: Protease HtpX homolog (291 aa).

Helical transmembrane passes span 4 to 24 (ILLFILTNVAVVAVLGIVASL) and 39 to 59 (SALLGFALIMGFGGAIISLLI). Position 144 (His-144) interacts with Zn(2+). Residue Glu-145 is part of the active site. His-148 contributes to the Zn(2+) binding site. The next 2 membrane-spanning stretches (helical) occupy residues 159 to 179 (LIQGVMNTFVVFLSRVIGYAV) and 199 to 219 (VSTIVLDIVLGFAAAIVVAWF). Glu-224 lines the Zn(2+) pocket.

It belongs to the peptidase M48B family. Zn(2+) serves as cofactor.

It is found in the cell inner membrane. This Polaromonas naphthalenivorans (strain CJ2) protein is Protease HtpX homolog.